A 1403-amino-acid chain; its full sequence is DNA-directed RNA polymerase subunit beta' (1403 aa).

Zn(2+) is bound by residues Cys-68, Cys-70, Cys-83, and Cys-86. Mg(2+)-binding residues include Asp-459, Asp-461, and Asp-463. Zn(2+) is bound by residues Cys-814, Cys-887, Cys-894, and Cys-897.

This sequence belongs to the RNA polymerase beta' chain family. The RNAP catalytic core consists of 2 alpha, 1 beta, 1 beta' and 1 omega subunit. When a sigma factor is associated with the core the holoenzyme is formed, which can initiate transcription. Mg(2+) serves as cofactor. Requires Zn(2+) as cofactor.

The enzyme catalyses RNA(n) + a ribonucleoside 5'-triphosphate = RNA(n+1) + diphosphate. In terms of biological role, DNA-dependent RNA polymerase catalyzes the transcription of DNA into RNA using the four ribonucleoside triphosphates as substrates. The sequence is that of DNA-directed RNA polymerase subunit beta' from Solibacter usitatus (strain Ellin6076).